The following is a 348-amino-acid chain: Protein RecA (348 aa).

Position 65 to 72 (65 to 72) interacts with ATP; it reads GPESSGKT. The span at 326-336 shows a compositional bias: basic and acidic residues; it reads LLTPAEEKPET. The disordered stretch occupies residues 326–348; it reads LLTPAEEKPETDAAPEIEENEEF. Acidic residues predominate over residues 338-348; it reads AAPEIEENEEF.

This sequence belongs to the RecA family.

The protein localises to the cytoplasm. In terms of biological role, can catalyze the hydrolysis of ATP in the presence of single-stranded DNA, the ATP-dependent uptake of single-stranded DNA by duplex DNA, and the ATP-dependent hybridization of homologous single-stranded DNAs. It interacts with LexA causing its activation and leading to its autocatalytic cleavage. The polypeptide is Protein RecA (Aliivibrio fischeri (strain ATCC 700601 / ES114) (Vibrio fischeri)).